The following is a 236-amino-acid chain: 2,3,4,5-tetrahydropyridine-2,6-dicarboxylate N-acetyltransferase (236 aa).

This sequence belongs to the transferase hexapeptide repeat family. DapH subfamily.

The catalysed reaction is (S)-2,3,4,5-tetrahydrodipicolinate + acetyl-CoA + H2O = L-2-acetamido-6-oxoheptanedioate + CoA. It participates in amino-acid biosynthesis; L-lysine biosynthesis via DAP pathway; LL-2,6-diaminopimelate from (S)-tetrahydrodipicolinate (acetylase route): step 1/3. Catalyzes the transfer of an acetyl group from acetyl-CoA to tetrahydrodipicolinate. The polypeptide is 2,3,4,5-tetrahydropyridine-2,6-dicarboxylate N-acetyltransferase (Thermotoga maritima (strain ATCC 43589 / DSM 3109 / JCM 10099 / NBRC 100826 / MSB8)).